The sequence spans 229 residues: Potassium/proton antiporter CemA (229 aa).

3 helical membrane-spanning segments follow: residues Phe-7–Val-27, Ile-107–Gly-127, and Ile-189–Ile-209.

This sequence belongs to the CemA family.

The protein localises to the plastid. It localises to the chloroplast inner membrane. It carries out the reaction K(+)(in) + H(+)(out) = K(+)(out) + H(+)(in). Contributes to K(+)/H(+) antiport activity by supporting proton efflux to control proton extrusion and homeostasis in chloroplasts in a light-dependent manner to modulate photosynthesis. Prevents excessive induction of non-photochemical quenching (NPQ) under continuous-light conditions. Indirectly promotes efficient inorganic carbon uptake into chloroplasts. The protein is Potassium/proton antiporter CemA of Nicotiana sylvestris (Wood tobacco).